The sequence spans 186 residues: Large ribosomal subunit protein eL18 (186 aa).

This sequence belongs to the eukaryotic ribosomal protein eL18 family. Component of the large ribosomal subunit. Mature ribosomes consist of a small (40S) and a large (60S) subunit. The 40S subunit contains about 32 different proteins and 1 molecule of RNA (18S). The 60S subunit contains 45 different proteins and 3 molecules of RNA (25S, 5.8S and 5S).

It is found in the cytoplasm. In terms of biological role, component of the ribosome, a large ribonucleoprotein complex responsible for the synthesis of proteins in the cell. The small ribosomal subunit (SSU) binds messenger RNAs (mRNAs) and translates the encoded message by selecting cognate aminoacyl-transfer RNA (tRNA) molecules. The large subunit (LSU) contains the ribosomal catalytic site termed the peptidyl transferase center (PTC), which catalyzes the formation of peptide bonds, thereby polymerizing the amino acids delivered by tRNAs into a polypeptide chain. The nascent polypeptides leave the ribosome through a tunnel in the LSU and interact with protein factors that function in enzymatic processing, targeting, and the membrane insertion of nascent chains at the exit of the ribosomal tunnel. The polypeptide is Large ribosomal subunit protein eL18 (Candida albicans (strain SC5314 / ATCC MYA-2876) (Yeast)).